The following is a 236-amino-acid chain: 15,16-dihydrobiliverdin:ferredoxin oxidoreductase (236 aa).

The protein belongs to the HY2 family.

It catalyses the reaction 15,16-dihydrobiliverdin + oxidized 2[4Fe-4S]-[ferredoxin] = biliverdin IXalpha + reduced 2[4Fe-4S]-[ferredoxin] + 2 H(+). In terms of biological role, catalyzes the two-electron reduction of biliverdin IX-alpha at the C15 methine bridge. The chain is 15,16-dihydrobiliverdin:ferredoxin oxidoreductase from Prochlorococcus marinus (strain MIT 9515).